Reading from the N-terminus, the 2073-residue chain is Fatty acid synthase subunit beta (2073 aa).

The interval 1–459 (MVEAEQVHQS…VYSTDDAGDL (459 aa)) is acetyltransferase. Catalysis depends on serine 270, which acts as the For acetyltransferase activity. The interval 470-858 (ALAVMITEKV…TRGIMFWKEL (389 aa)) is enoyl reductase. Serine 1122 bears the Phosphoserine mark. The segment at 1155 to 1644 (GPEYTWFRAI…LPNTELITKL (490 aa)) is dehydratase. Histidine 1361 (for dehydratase activity) is an active-site residue. A MaoC-like domain is found at 1558–1667 (PVFVTPPTNS…VEVLNQETSE (110 aa)). The interval 1645-2073 (SHTGMINGRK…LQNWDEYESS (429 aa)) is malonyl/palmitoyl transferase. Serine 1828 (for malonyltransferase activity) is an active-site residue. Residue serine 2073 is modified to Phosphoserine.

Belongs to the fungal fatty acid synthetase subunit beta family. In terms of assembly, [Alpha(6)beta(6)] hexamers of two multifunctional subunits (alpha and beta).

It carries out the reaction acetyl-CoA + n malonyl-CoA + 2n NADPH + 4n H(+) = a long-chain-acyl-CoA + n CoA + n CO2 + 2n NADP(+).. The enzyme catalyses holo-[ACP] + acetyl-CoA = acetyl-[ACP] + CoA. The catalysed reaction is holo-[ACP] + malonyl-CoA = malonyl-[ACP] + CoA. It catalyses the reaction a (3R)-hydroxyacyl-[ACP] = a (2E)-enoyl-[ACP] + H2O. It carries out the reaction a 2,3-saturated acyl-[ACP] + NAD(+) = a (2E)-enoyl-[ACP] + NADH + H(+). The enzyme catalyses (9Z)-octadecenoyl-[ACP] + H2O = (9Z)-octadecenoate + holo-[ACP] + H(+). Its function is as follows. Fatty acid synthetase catalyzes the formation of long-chain fatty acids from acetyl-CoA, malonyl-CoA and NADPH. The beta subunit contains domains for: [acyl-carrier-protein] acetyltransferase and malonyltransferase, S-acyl fatty acid synthase thioesterase, enoyl-[acyl-carrier-protein] reductase, and 3-hydroxypalmitoyl-[acyl-carrier-protein] dehydratase. The sequence is that of Fatty acid synthase subunit beta (fas1) from Schizosaccharomyces pombe (strain 972 / ATCC 24843) (Fission yeast).